A 418-amino-acid polypeptide reads, in one-letter code: Serine hydroxymethyltransferase (418 aa).

Residues leucine 121 and 125–127 (GHL) each bind (6S)-5,6,7,8-tetrahydrofolate. An N6-(pyridoxal phosphate)lysine modification is found at lysine 230. (6S)-5,6,7,8-tetrahydrofolate is bound at residue 356–358 (SPF).

It belongs to the SHMT family. In terms of assembly, homodimer. Pyridoxal 5'-phosphate serves as cofactor.

The protein localises to the cytoplasm. It carries out the reaction (6R)-5,10-methylene-5,6,7,8-tetrahydrofolate + glycine + H2O = (6S)-5,6,7,8-tetrahydrofolate + L-serine. The protein operates within one-carbon metabolism; tetrahydrofolate interconversion. It functions in the pathway amino-acid biosynthesis; glycine biosynthesis; glycine from L-serine: step 1/1. Catalyzes the reversible interconversion of serine and glycine with tetrahydrofolate (THF) serving as the one-carbon carrier. This reaction serves as the major source of one-carbon groups required for the biosynthesis of purines, thymidylate, methionine, and other important biomolecules. Also exhibits THF-independent aldolase activity toward beta-hydroxyamino acids, producing glycine and aldehydes, via a retro-aldol mechanism. The chain is Serine hydroxymethyltransferase from Pseudoalteromonas atlantica (strain T6c / ATCC BAA-1087).